The sequence spans 88 residues: Small ribosomal subunit protein bS20 (88 aa).

Residues 1–20 form a disordered region; that stretch reads MANTAQARKRARQAVVQNAH.

It belongs to the bacterial ribosomal protein bS20 family.

In terms of biological role, binds directly to 16S ribosomal RNA. This Ralstonia pickettii (strain 12J) protein is Small ribosomal subunit protein bS20.